The following is a 110-amino-acid chain: Ribonuclease P protein component (110 aa).

The protein belongs to the RnpA family. In terms of assembly, consists of a catalytic RNA component (M1 or rnpB) and a protein subunit.

The catalysed reaction is Endonucleolytic cleavage of RNA, removing 5'-extranucleotides from tRNA precursor.. RNaseP catalyzes the removal of the 5'-leader sequence from pre-tRNA to produce the mature 5'-terminus. It can also cleave other RNA substrates such as 4.5S RNA. The protein component plays an auxiliary but essential role in vivo by binding to the 5'-leader sequence and broadening the substrate specificity of the ribozyme. The protein is Ribonuclease P protein component of Mesoplasma florum (strain ATCC 33453 / NBRC 100688 / NCTC 11704 / L1) (Acholeplasma florum).